A 345-amino-acid chain; its full sequence is Mitochondrial metalloendopeptidase OMA1 (345 aa).

Residues 1 to 67 (MLRNIIRFKG…ILLDKSSRKY (67 aa)) lie on the Mitochondrial matrix side of the membrane. A helical transmembrane segment spans residues 68 to 88 (LALLFGGCSLFYYTHLDKAPV). Topologically, residues 89-345 (SDRSRFIWVS…GNYYKSFFSM (257 aa)) are mitochondrial intermembrane. Residue His-203 participates in Zn(2+) binding. Residue Glu-204 is part of the active site. Zn(2+)-binding residues include His-207 and Glu-257. Cys-272 and Cys-332 are oxidised to a cystine. The tract at residues 314–345 (ENMSKWLPKANEIYEQSDCSSMGNYYKSFFSM) is required for protease activation.

It belongs to the peptidase M48 family. Homooligomer. It depends on Zn(2+) as a cofactor. Forms a redox-dependent disulfide bond, which plays a structural role and regulates its conformational stability and activity.

Its subcellular location is the mitochondrion inner membrane. Its activity is regulated as follows. Protease activity is induced in response to various mitochondrial stress, such as changes in membrane potential, oxidative stress or chronic hyperpolarization, and depends on its C-terminal region. Functionally, protease that is part of the quality control system in the inner membrane of mitochondria. Activated in response to various mitochondrial stress, leading to the proteolytic cleavage of target proteins, such as OXA1 and COX1. Cleaves and thereby promotes the turnover of mistranslated or misfolded membrane proteins. Cleaves the misfolded multi-pass membrane protein OXA1. Involved in quality control of cytochrome oxidase assembly: mediates the cleavage of COX1 in cells lacking COA2. Required for the stability of the respiratory supercomplexes. Required for TOR signaling. In Saccharomyces cerevisiae (strain ATCC 204508 / S288c) (Baker's yeast), this protein is Mitochondrial metalloendopeptidase OMA1.